A 339-amino-acid polypeptide reads, in one-letter code: Phytoene synthase (339 aa).

This sequence belongs to the phytoene/squalene synthase family. ATP is required as a cofactor. It depends on Mn(2+) as a cofactor. Mg(2+) serves as cofactor.

The protein operates within carotenoid biosynthesis; phytoene biosynthesis. Functionally, involved in the biosynthesis of carotenoids. Catalyzes the condensation of two molecules of geranylgeranyl diphosphate (GGPP) to give prephytoene diphosphate (PPPP) and the subsequent rearrangement of the cyclopropylcarbinyl intermediate to yield phytoene. This chain is Phytoene synthase (crtB), found in Rhodobacter capsulatus (strain ATCC BAA-309 / NBRC 16581 / SB1003).